We begin with the raw amino-acid sequence, 97 residues long: Non-pathogenic pore-forming peptide amoebapore A (97 aa).

The N-terminal stretch at M1–Q20 is a signal peptide. Residues G21–C97 enclose the Saposin B-type domain. Cystine bridges form between C25-C97, C28-C91, and C55-C66.

In terms of assembly, monomer. Homodimer. Hexamer; formed during insertion in the membrane.

It localises to the cytoplasmic granule. Its function is as follows. Forms pores in the cell membrane of host cells. Implicated in the cytolytic activity of the parasite. Pore forming activity is lower compared to the activity of ameobapore A from the pathogenic strain HM-1:IMSS. The polypeptide is Non-pathogenic pore-forming peptide amoebapore A (Entamoeba histolytica).